We begin with the raw amino-acid sequence, 542 residues long: Membrane protein insertase YidC (542 aa).

Residues 6–26 form a helical membrane-spanning segment; that stretch reads NILLIGLLFVSFLLWQQWQAD. A compositionally biased stretch (polar residues) spans 32 to 41; that stretch reads VAQTQSSVAP. Residues 32–57 are disordered; sequence VAQTQSSVAPSTVADAHSSDVPDADS. 5 consecutive transmembrane segments (helical) span residues 326-346, 350-370, 421-441, 458-478, and 501-521; these read LVVDYGFLWWLAIPIHWLLMF, FVGNWGVAIILITLTVRGMLY, GGCLPILLQMPIFIALYWVLL, LSVQDPYYVMPILMGVSMFIM, and VIFTVFFLWFPAGLVLYWLVG.

The protein belongs to the OXA1/ALB3/YidC family. Type 1 subfamily. In terms of assembly, interacts with the Sec translocase complex via SecD. Specifically interacts with transmembrane segments of nascent integral membrane proteins during membrane integration.

It is found in the cell inner membrane. Required for the insertion and/or proper folding and/or complex formation of integral membrane proteins into the membrane. Involved in integration of membrane proteins that insert both dependently and independently of the Sec translocase complex, as well as at least some lipoproteins. Aids folding of multispanning membrane proteins. This is Membrane protein insertase YidC from Shewanella piezotolerans (strain WP3 / JCM 13877).